The following is a 623-amino-acid chain: DNA-directed RNA polymerase subunit beta' (623 aa).

4 residues coordinate Zn(2+): Cys70, Cys72, Cys85, and Cys88. The Mg(2+) site is built by Asp466, Asp468, and Asp470.

This sequence belongs to the RNA polymerase beta' chain family. RpoC1 subfamily. In plastids the minimal PEP RNA polymerase catalytic core is composed of four subunits: alpha, beta, beta', and beta''. When a (nuclear-encoded) sigma factor is associated with the core the holoenzyme is formed, which can initiate transcription. The cofactor is Mg(2+). Zn(2+) is required as a cofactor.

It is found in the plastid. Its subcellular location is the chloroplast. The enzyme catalyses RNA(n) + a ribonucleoside 5'-triphosphate = RNA(n+1) + diphosphate. Its function is as follows. DNA-dependent RNA polymerase catalyzes the transcription of DNA into RNA using the four ribonucleoside triphosphates as substrates. This Guillardia theta (Cryptophyte) protein is DNA-directed RNA polymerase subunit beta'.